Reading from the N-terminus, the 241-residue chain is ATP synthase subunit a (241 aa).

5 consecutive transmembrane segments (helical) span residues glycine 30–glycine 50, phenylalanine 91–tryptophan 111, isoleucine 128–serine 148, leucine 193–leucine 213, and glycine 214–glycine 234.

This sequence belongs to the ATPase A chain family. In terms of assembly, F-type ATPases have 2 components, CF(1) - the catalytic core - and CF(0) - the membrane proton channel. CF(1) has five subunits: alpha(3), beta(3), gamma(1), delta(1), epsilon(1). CF(0) has four main subunits: a, b, b' and c.

The protein resides in the cellular thylakoid membrane. In terms of biological role, key component of the proton channel; it plays a direct role in the translocation of protons across the membrane. The chain is ATP synthase subunit a from Prochlorococcus marinus (strain MIT 9312).